The following is a 909-amino-acid chain: UPF0182 protein H16_A1615 (909 aa).

The next 7 membrane-spanning stretches (helical) occupy residues 16–36, 58–78, 114–134, 169–189, 205–225, 246–266, and 281–301; these read TWVVAVIVALIAVSRVTGLVV, ALLFLAVFAVSAGALWLSGWL, VAVLVGLLMAVGELSSWAIAL, WLLLLLGCSAVLAGVVYGLRG, ATHGSALLGLFFALQAWSYWL, VHVGLPVLWLQVGLAAAAAAA, and AAALLVVGSAIVLGTIWPALF.

The protein belongs to the UPF0182 family.

The protein resides in the cell membrane. This Cupriavidus necator (strain ATCC 17699 / DSM 428 / KCTC 22496 / NCIMB 10442 / H16 / Stanier 337) (Ralstonia eutropha) protein is UPF0182 protein H16_A1615.